Reading from the N-terminus, the 427-residue chain is BSD domain-containing protein 1 (427 aa).

A phosphoserine mark is found at Ser92 and Ser166. In terms of domain architecture, BSD spans 146 to 198 (WLSEFCLEEKKGEISELLVGSPSIRALYTKMVPAAVSHSEFWHRYFYKVHQLE). The interval 208–397 (KQRADQSISE…ISEDWEKDFD (190 aa)) is disordered. Acidic residues predominate over residues 219 to 229 (PGWEEEEEELE). A compositionally biased stretch (basic and acidic residues) spans 236–245 (KEAKIPKETK). Residues 268–279 (PAEATPSESSES) are compositionally biased toward low complexity. Residues 324-333 (GPPPPPPSKP) are compositionally biased toward pro residues. The segment covering 347-364 (PPARVETLREEVPTDLRV) has biased composition (basic and acidic residues). Phosphothreonine is present on Thr353. Polar residues predominate over residues 368–387 (NSDSGKSTPSNNGKKGSSTD). Ser384 and Ser385 each carry phosphoserine. Residues 388–397 (ISEDWEKDFD) are compositionally biased toward acidic residues. Position 415 is a phosphoserine (Ser415).

The sequence is that of BSD domain-containing protein 1 (Bsdc1) from Mus musculus (Mouse).